The primary structure comprises 203 residues: Protein GrpE (203 aa).

A compositionally biased stretch (basic and acidic residues) spans 1–20; the sequence is MSSKEQNVHEEQVSKEKEGM. Residues 1 to 38 are disordered; the sequence is MSSKEQNVHEEQVSKEKEGMESVMNESQEQVKSEDAQA.

The protein belongs to the GrpE family. Homodimer.

Its subcellular location is the cytoplasm. Its function is as follows. Participates actively in the response to hyperosmotic and heat shock by preventing the aggregation of stress-denatured proteins, in association with DnaK and GrpE. It is the nucleotide exchange factor for DnaK and may function as a thermosensor. Unfolded proteins bind initially to DnaJ; upon interaction with the DnaJ-bound protein, DnaK hydrolyzes its bound ATP, resulting in the formation of a stable complex. GrpE releases ADP from DnaK; ATP binding to DnaK triggers the release of the substrate protein, thus completing the reaction cycle. Several rounds of ATP-dependent interactions between DnaJ, DnaK and GrpE are required for fully efficient folding. The polypeptide is Protein GrpE (Proteus mirabilis (strain HI4320)).